A 406-amino-acid chain; its full sequence is Solanesyl diphosphate synthase 1, chloroplastic (406 aa).

The N-terminal 71 residues, 1 to 71 (MMTSCRNIDL…NGIGQSQTVS (71 aa)), are a transit peptide targeting the chloroplast. Isopentenyl diphosphate contacts are provided by lysine 126, arginine 129, and histidine 164. Mg(2+) is bound by residues aspartate 171 and aspartate 175. Arginine 180 contacts an all-trans-polyprenyl diphosphate. Arginine 181 is an isopentenyl diphosphate binding site. 4 residues coordinate an all-trans-polyprenyl diphosphate: lysine 257, threonine 258, glutamine 295, and lysine 312.

The protein belongs to the FPP/GGPP synthase family. In terms of assembly, homodimer. Interacts with FBN5. Requires Mg(2+) as cofactor. As to expression, higher expression in leaves than in roots.

It is found in the plastid. The protein localises to the chloroplast. It carries out the reaction 5 isopentenyl diphosphate + (2E,6E,10E)-geranylgeranyl diphosphate = all-trans-nonaprenyl diphosphate + 5 diphosphate. It catalyses the reaction isopentenyl diphosphate + (2E,6E)-farnesyl diphosphate = (2E,6E,10E)-geranylgeranyl diphosphate + diphosphate. In terms of biological role, involved in providing solanesyl diphosphate for plastoquinone-9 (PQ-9) formation in plastids. Catalyzes the elongation of the prenyl side chain of PQ-9 in plastids. Contributes to the biosynthesis of plastochromanol-8 (PC-8) in plastids. Does not contribute to the synthesis of tocopherol or ubiquinone. PQ-9 and PC-8 are lipophilic antioxidants that act as protectant against photooxidative stress under high light stress conditions. Prefers geranylgeranyl diphosphate to farnesyl diphosphate as substrate. No activity with geranyl diphosphate or dimethylallyl diphosphate as substrate. The protein is Solanesyl diphosphate synthase 1, chloroplastic of Arabidopsis thaliana (Mouse-ear cress).